Here is a 1339-residue protein sequence, read N- to C-terminus: DNA polymerase alpha catalytic subunit (1339 aa).

Disordered stretches follow at residues 1–29 (MEDW…SEEE) and 60–89 (AKRR…HQQK). A compositionally biased stretch (basic and acidic residues) spans 8 to 19 (RSEEQKRCEEKG). The Zn(2+) site is built by Cys-1179, Cys-1182, Cys-1215, Cys-1218, Cys-1235, Cys-1244, Cys-1274, and Cys-1289. The segment at 1179–1218 (CTHCQLVVPVDPHKYINDMFSSREKPPPTAPFELYVCFNC) adopts a CysA-type zinc-finger fold. Positions 1244 to 1274 (CSGGNVASVRALRAQFTYLRAMFDVPQALNC) match the CysB motif motif.

Belongs to the DNA polymerase type-B family.

The protein localises to the nucleus. It catalyses the reaction DNA(n) + a 2'-deoxyribonucleoside 5'-triphosphate = DNA(n+1) + diphosphate. In terms of biological role, polymerase alpha in a complex with DNA primase is a replicative polymerase. This chain is DNA polymerase alpha catalytic subunit, found in Trypanosoma brucei brucei.